Here is a 171-residue protein sequence, read N- to C-terminus: Secretion monitor (171 aa).

The signal sequence occupies residues 1-30 (MIGILNRWRQFGRRYFWPHLLLGMVAASLG).

Belongs to the SecM family.

Its subcellular location is the cytoplasm. The protein localises to the cytosol. It localises to the periplasm. Regulates secA expression by translational coupling of the secM secA operon. Translational pausing at a specific Pro residue 5 residues before the end of the protein may allow disruption of a mRNA repressor helix that normally suppresses secA translation initiation. The polypeptide is Secretion monitor (Pectobacterium atrosepticum (strain SCRI 1043 / ATCC BAA-672) (Erwinia carotovora subsp. atroseptica)).